The chain runs to 81 residues: Three-finger toxin MALT0051C (81 aa).

Residues 1–21 (MKTLLLTLVVVTVVCLDFGHT) form the signal peptide. 4 disulfides stabilise this stretch: C24/C43, C38/C60, C62/C73, and C74/C79.

It belongs to the three-finger toxin family. Short-chain subfamily. Type I alpha-neurotoxin sub-subfamily. As to expression, expressed by the venom gland.

It localises to the secreted. Binds to muscle nicotinic acetylcholine receptor (nAChR) and inhibit acetylcholine from binding to the receptor, thereby impairing neuromuscular transmission. The protein is Three-finger toxin MALT0051C of Micrurus altirostris (Uruguayan coral snake).